Consider the following 469-residue polypeptide: Probable Xaa-Pro aminopeptidase PEPP (469 aa).

The Mn(2+) site is built by D264, D275, E398, and E438.

Belongs to the peptidase M24B family. Mn(2+) is required as a cofactor.

It carries out the reaction Release of any N-terminal amino acid, including proline, that is linked to proline, even from a dipeptide or tripeptide.. Its function is as follows. Catalyzes the removal of a penultimate prolyl residue from the N-termini of peptides. The protein is Probable Xaa-Pro aminopeptidase PEPP (PEPP) of Ajellomyces capsulatus (strain G186AR / H82 / ATCC MYA-2454 / RMSCC 2432) (Darling's disease fungus).